The primary structure comprises 58 residues: Small ribosomal subunit protein bS21 (58 aa).

Residues arginine 35 to lysine 58 form a disordered region. Residues valine 43–lysine 58 are compositionally biased toward basic residues.

It belongs to the bacterial ribosomal protein bS21 family.

The sequence is that of Small ribosomal subunit protein bS21 from Clostridium botulinum (strain Alaska E43 / Type E3).